The following is a 209-amino-acid chain: Orotate phosphoribosyltransferase (209 aa).

Residues R96, K100, H102, and 122–130 each bind 5-phospho-alpha-D-ribose 1-diphosphate; that span reads EDLISTGGS. S126 contacts orotate.

The protein belongs to the purine/pyrimidine phosphoribosyltransferase family. PyrE subfamily. In terms of assembly, homodimer. The cofactor is Mg(2+).

The enzyme catalyses orotidine 5'-phosphate + diphosphate = orotate + 5-phospho-alpha-D-ribose 1-diphosphate. It participates in pyrimidine metabolism; UMP biosynthesis via de novo pathway; UMP from orotate: step 1/2. In terms of biological role, catalyzes the transfer of a ribosyl phosphate group from 5-phosphoribose 1-diphosphate to orotate, leading to the formation of orotidine monophosphate (OMP). This is Orotate phosphoribosyltransferase from Streptococcus sanguinis (strain SK36).